The sequence spans 379 residues: Cytochrome b (379 aa).

Helical transmembrane passes span 33–53 (FGSLLGLCLISQILTGLFLAM), 77–98 (WLIRNLHANGASFFFICLYLHI), 113–133 (WNIGVVLFLLVMMTAFVGYVL), and 178–198 (FFAFHFLFPFVVAGATMIHLL). Positions 83 and 97 each coordinate heme b. 2 residues coordinate heme b: His182 and His196. A ubiquinone is bound at residue His201. 4 helical membrane-spanning segments follow: residues 226–246 (YKDLLGFIIMLTALTMLALFY), 288–308 (LGGVLALLSSILVLMVVPILH), 320–340 (ASQLLFWILVADMLVLTWIGG), and 347–367 (YIIIGQVASVLYFSLFLVLNP).

Belongs to the cytochrome b family. As to quaternary structure, the cytochrome bc1 complex contains 3 respiratory subunits (MT-CYB, CYC1 and UQCRFS1), 2 core proteins (UQCRC1 and UQCRC2) and probably 6 low-molecular weight proteins. Heme b serves as cofactor.

The protein localises to the mitochondrion inner membrane. Component of the ubiquinol-cytochrome c reductase complex (complex III or cytochrome b-c1 complex) that is part of the mitochondrial respiratory chain. The b-c1 complex mediates electron transfer from ubiquinol to cytochrome c. Contributes to the generation of a proton gradient across the mitochondrial membrane that is then used for ATP synthesis. The protein is Cytochrome b (mt-cyb) of Anguilla dieffenbachii (New Zealand longfin eel).